The following is a 526-amino-acid chain: Acetyl-CoA hydrolase (526 aa).

A CoA-binding site is contributed by 277–281 (GIGNI). Glu-302 serves as the catalytic 5-glutamyl coenzyme A thioester intermediate. CoA contacts are provided by Asn-392 and Gly-396.

This sequence belongs to the acetyl-CoA hydrolase/transferase family.

The protein localises to the cytoplasm. It carries out the reaction acetyl-CoA + H2O = acetate + CoA + H(+). In terms of biological role, presumably involved in regulating the intracellular acetyl-CoA pool for fatty acid and cholesterol synthesis and fatty acid oxidation. In Candida glabrata (strain ATCC 2001 / BCRC 20586 / JCM 3761 / NBRC 0622 / NRRL Y-65 / CBS 138) (Yeast), this protein is Acetyl-CoA hydrolase (ACH1).